Reading from the N-terminus, the 276-residue chain is tRNA (guanine-N(7)-)-methyltransferase (276 aa).

Residues Met1–Arg36 are disordered. At Ala2 the chain carries N-acetylalanine. Phosphoserine; by PKB/AKT1 and RPS6KA3 is present on Ser27. Residues Gly84, Glu107, Ile108, Arg109, Asn140, Ala141, and Leu160 each coordinate S-adenosyl-L-homocysteine. 2 residues coordinate S-adenosyl-L-methionine: Gly84 and Glu107. Arg109, Asn140, Ala141, and Leu160 together coordinate S-adenosyl-L-methionine. The active site involves Asp163. Residues Pro164 to Lys172 form an alphaC helix region. Thr238 and Glu240 together coordinate S-adenosyl-L-homocysteine. Residues Thr238 and Glu240 each contribute to the S-adenosyl-L-methionine site. Residues Thr238–Arg246 form an alpha6 helix region.

This sequence belongs to the class I-like SAM-binding methyltransferase superfamily. TrmB family. Catalytic component of the METTL1-WDR4 complex, composed of METTL1 and WDR4. Post-translationally, phosphorylation at Ser-27 by PKB/AKT1 inactivates its methyltransferase activity via a steric interference mechanism in the active site that locally disrupts the catalytic center. Phosphorylation at Ser-27 does not affect the interaction with WDR4. Ubiquitous.

It is found in the nucleus. It catalyses the reaction guanosine(46) in tRNA + S-adenosyl-L-methionine = N(7)-methylguanosine(46) in tRNA + S-adenosyl-L-homocysteine. The catalysed reaction is a guanosine in mRNA + S-adenosyl-L-methionine = an N(7)-methylguanosine in mRNA + S-adenosyl-L-homocysteine. It carries out the reaction a guanosine in miRNA + S-adenosyl-L-methionine = an N(7)-methylguanosine in miRNA + S-adenosyl-L-homocysteine. It participates in tRNA modification; N(7)-methylguanine-tRNA biosynthesis. Catalytic component of METTL1-WDR4 methyltransferase complex that mediates the formation of N(7)-methylguanine in a subset of RNA species, such as tRNAs, mRNAs and microRNAs (miRNAs). Catalyzes the formation of N(7)-methylguanine at position 46 (m7G46) in a large subset of tRNAs that contain the 5'-RAGGU-3' motif within the variable loop. M7G46 interacts with C13-G22 in the D-loop to stabilize tRNA tertiary structure and protect tRNAs from decay. Also acts as a methyltransferase for a subset of internal N(7)-methylguanine in mRNAs. Internal N(7)-methylguanine methylation of mRNAs in response to stress promotes their relocalization to stress granules, thereby suppressing their translation. Also methylates a specific subset of miRNAs, such as let-7. N(7)-methylguanine methylation of let-7 miRNA promotes let-7 miRNA processing by disrupting an inhibitory secondary structure within the primary miRNA transcript (pri-miRNA). Acts as a regulator of embryonic stem cell self-renewal and differentiation. The polypeptide is tRNA (guanine-N(7)-)-methyltransferase (Homo sapiens (Human)).